We begin with the raw amino-acid sequence, 132 residues long: MLLLSSPFVSVSPPPPPLSSHGARPALRIEAARQLTGRVVTTKADKTVGVEVVRLAPHPKYKRRERIKKKYQAHDPDNQFKVGDVVELQPSRPISKTKHFLAIPLPPRDTRRKSQLLPPLQSDDDQEPSSRE.

Positions 1–11 are enriched in low complexity; sequence MLLLSSPFVSV. Disordered regions lie at residues 1-23 and 104-132; these read MLLL…SHGA and PLPP…SSRE. Residues 1 to 31 constitute a chloroplast transit peptide; that stretch reads MLLLSSPFVSVSPPPPPLSSHGARPALRIEA. The segment covering 122 to 132 has biased composition (acidic residues); that stretch reads SDDDQEPSSRE.

Belongs to the universal ribosomal protein uS17 family. In terms of assembly, part of the 30S ribosomal subunit.

The protein localises to the plastid. It localises to the chloroplast. One of the primary rRNA binding proteins, it binds specifically to the 5'-end of 16S ribosomal RNA. In terms of biological role, in the hcf60 mutation the Activator tag is inserted 17 base pars upstream of the initiation codon. This mutation is seedling lethal, due to plastid ribosome insufficiency. However under non-light stressed conditions photosynthesis and oxygen evolution can occur. The polypeptide is Small ribosomal subunit protein uS17c (RPS17) (Zea mays (Maize)).